Reading from the N-terminus, the 234-residue chain is ATP synthase subunit a 1 (234 aa).

5 helical membrane-spanning segments follow: residues 20 to 40 (ETVV…ILLT), 76 to 96 (LLPL…LGVI), 105 to 125 (DLSV…AYGV), 162 to 184 (LFGN…GFLA), and 195 to 215 (EALV…AGAM).

This sequence belongs to the ATPase A chain family. As to quaternary structure, F-type ATPases have 2 components, CF(1) - the catalytic core - and CF(0) - the membrane proton channel. CF(1) has five subunits: alpha(3), beta(3), gamma(1), delta(1), epsilon(1). CF(0) has three main subunits: a(1), b(2) and c(9-12). The alpha and beta chains form an alternating ring which encloses part of the gamma chain. CF(1) is attached to CF(0) by a central stalk formed by the gamma and epsilon chains, while a peripheral stalk is formed by the delta and b chains.

The protein localises to the cell inner membrane. Functionally, key component of the proton channel; it plays a direct role in the translocation of protons across the membrane. The sequence is that of ATP synthase subunit a 1 from Hahella chejuensis (strain KCTC 2396).